The primary structure comprises 1185 residues: DNA-directed RNA polymerase subunit beta' (1185 aa).

Residues Cys67, Cys69, Cys82, and Cys85 each coordinate Zn(2+). Asp457, Asp459, and Asp461 together coordinate Mg(2+). Zn(2+) is bound by residues Cys802, Cys876, Cys883, and Cys886.

Belongs to the RNA polymerase beta' chain family. In terms of assembly, the RNAP catalytic core consists of 2 alpha, 1 beta, 1 beta' and 1 omega subunit. When a sigma factor is associated with the core the holoenzyme is formed, which can initiate transcription. The cofactor is Mg(2+). Requires Zn(2+) as cofactor.

It carries out the reaction RNA(n) + a ribonucleoside 5'-triphosphate = RNA(n+1) + diphosphate. Its function is as follows. DNA-dependent RNA polymerase catalyzes the transcription of DNA into RNA using the four ribonucleoside triphosphates as substrates. This Clostridium novyi (strain NT) protein is DNA-directed RNA polymerase subunit beta'.